Consider the following 360-residue polypeptide: DNA replication and repair protein RecF (360 aa).

30–37 is a binding site for ATP; sequence GQNGSGKT.

It belongs to the RecF family.

It localises to the cytoplasm. Its function is as follows. The RecF protein is involved in DNA metabolism; it is required for DNA replication and normal SOS inducibility. RecF binds preferentially to single-stranded, linear DNA. It also seems to bind ATP. The protein is DNA replication and repair protein RecF of Shewanella baltica (strain OS223).